We begin with the raw amino-acid sequence, 183 residues long: Translation initiation factor IF-3 (183 aa).

Belongs to the IF-3 family. Monomer.

The protein resides in the cytoplasm. IF-3 binds to the 30S ribosomal subunit and shifts the equilibrium between 70S ribosomes and their 50S and 30S subunits in favor of the free subunits, thus enhancing the availability of 30S subunits on which protein synthesis initiation begins. The polypeptide is Translation initiation factor IF-3 (Pseudomonas fluorescens (strain SBW25)).